A 465-amino-acid chain; its full sequence is Cysteine--tRNA ligase (465 aa).

A Zn(2+)-binding site is contributed by Cys27. The short motif at 29–39 is the 'HIGH' region element; that stretch reads PTVYNFFHIGN. 3 residues coordinate Zn(2+): Cys207, His232, and Glu236. Positions 264 to 268 match the 'KMSKS' region motif; that stretch reads KMSKS. Position 267 (Lys267) interacts with ATP.

It belongs to the class-I aminoacyl-tRNA synthetase family. As to quaternary structure, monomer. Requires Zn(2+) as cofactor.

The protein localises to the cytoplasm. The enzyme catalyses tRNA(Cys) + L-cysteine + ATP = L-cysteinyl-tRNA(Cys) + AMP + diphosphate. In Clostridium botulinum (strain Loch Maree / Type A3), this protein is Cysteine--tRNA ligase.